Reading from the N-terminus, the 142-residue chain is Large ribosomal subunit protein uL13 (142 aa).

It belongs to the universal ribosomal protein uL13 family. As to quaternary structure, part of the 50S ribosomal subunit.

Its function is as follows. This protein is one of the early assembly proteins of the 50S ribosomal subunit, although it is not seen to bind rRNA by itself. It is important during the early stages of 50S assembly. This Pectobacterium atrosepticum (strain SCRI 1043 / ATCC BAA-672) (Erwinia carotovora subsp. atroseptica) protein is Large ribosomal subunit protein uL13.